A 208-amino-acid chain; its full sequence is ATP-dependent Clp protease proteolytic subunit (208 aa).

The active-site Nucleophile is S105. Residue H130 is part of the active site.

Belongs to the peptidase S14 family. As to quaternary structure, fourteen ClpP subunits assemble into 2 heptameric rings which stack back to back to give a disk-like structure with a central cavity, resembling the structure of eukaryotic proteasomes.

It localises to the cytoplasm. It catalyses the reaction Hydrolysis of proteins to small peptides in the presence of ATP and magnesium. alpha-casein is the usual test substrate. In the absence of ATP, only oligopeptides shorter than five residues are hydrolyzed (such as succinyl-Leu-Tyr-|-NHMec, and Leu-Tyr-Leu-|-Tyr-Trp, in which cleavage of the -Tyr-|-Leu- and -Tyr-|-Trp bonds also occurs).. Functionally, cleaves peptides in various proteins in a process that requires ATP hydrolysis. Has a chymotrypsin-like activity. Plays a major role in the degradation of misfolded proteins. The chain is ATP-dependent Clp protease proteolytic subunit from Xylella fastidiosa (strain M23).